A 359-amino-acid polypeptide reads, in one-letter code: Nicotinate-nucleotide--dimethylbenzimidazole phosphoribosyltransferase (359 aa).

The active-site Proton acceptor is E318.

It belongs to the CobT family. Homodimer.

The catalysed reaction is 5,6-dimethylbenzimidazole + nicotinate beta-D-ribonucleotide = alpha-ribazole 5'-phosphate + nicotinate + H(+). Its pathway is nucleoside biosynthesis; alpha-ribazole biosynthesis; alpha-ribazole from 5,6-dimethylbenzimidazole: step 1/2. Catalyzes the synthesis of alpha-ribazole-5'-phosphate from nicotinate mononucleotide (NAMN) and 5,6-dimethylbenzimidazole (DMB). This Escherichia coli O157:H7 protein is Nicotinate-nucleotide--dimethylbenzimidazole phosphoribosyltransferase.